A 279-amino-acid chain; its full sequence is Dermonecrotic toxin LspiSicTox-betaIE3i (279 aa).

His-5 is an active-site residue. The Mg(2+) site is built by Glu-25 and Asp-27. Residue His-41 is the Nucleophile of the active site. 2 disulfides stabilise this stretch: Cys-45–Cys-51 and Cys-47–Cys-190. Position 85 (Asp-85) interacts with Mg(2+).

It belongs to the arthropod phospholipase D family. Class II subfamily. It depends on Mg(2+) as a cofactor. As to expression, expressed by the venom gland.

It localises to the secreted. It carries out the reaction an N-(acyl)-sphingosylphosphocholine = an N-(acyl)-sphingosyl-1,3-cyclic phosphate + choline. The catalysed reaction is an N-(acyl)-sphingosylphosphoethanolamine = an N-(acyl)-sphingosyl-1,3-cyclic phosphate + ethanolamine. The enzyme catalyses a 1-acyl-sn-glycero-3-phosphocholine = a 1-acyl-sn-glycero-2,3-cyclic phosphate + choline. It catalyses the reaction a 1-acyl-sn-glycero-3-phosphoethanolamine = a 1-acyl-sn-glycero-2,3-cyclic phosphate + ethanolamine. Dermonecrotic toxins cleave the phosphodiester linkage between the phosphate and headgroup of certain phospholipids (sphingolipid and lysolipid substrates), forming an alcohol (often choline) and a cyclic phosphate. This toxin acts on sphingomyelin (SM). It may also act on ceramide phosphoethanolamine (CPE), lysophosphatidylcholine (LPC) and lysophosphatidylethanolamine (LPE), but not on lysophosphatidylserine (LPS), and lysophosphatidylglycerol (LPG). It acts by transphosphatidylation, releasing exclusively cyclic phosphate products as second products. Induces dermonecrosis, hemolysis, increased vascular permeability, edema, inflammatory response, and platelet aggregation. This is Dermonecrotic toxin LspiSicTox-betaIE3i from Loxosceles spinulosa (Recluse spider).